The chain runs to 380 residues: Ribosomal RNA large subunit methyltransferase F (380 aa).

2 disordered regions span residues 1-54 (MSHK…PRNA) and 260-279 (SQVMSPQVQPSGKVKPATDK). The span at 21 to 32 (QRQVVSKSSLQK) shows a compositional bias: low complexity. Positions 44–53 (QKSKALHPRN) are enriched in basic residues. The segment covering 260–270 (SQVMSPQVQPS) has biased composition (low complexity).

This sequence belongs to the methyltransferase superfamily. METTL16/RlmF family.

It localises to the cytoplasm. It carries out the reaction adenosine(1618) in 23S rRNA + S-adenosyl-L-methionine = N(6)-methyladenosine(1618) in 23S rRNA + S-adenosyl-L-homocysteine + H(+). Functionally, specifically methylates the adenine in position 1618 of 23S rRNA. This Shewanella pealeana (strain ATCC 700345 / ANG-SQ1) protein is Ribosomal RNA large subunit methyltransferase F.